A 707-amino-acid chain; its full sequence is Polyribonucleotide nucleotidyltransferase (707 aa).

Mg(2+)-binding residues include aspartate 484 and aspartate 490. Residues 551–610 form the KH domain; sequence PRVVRMVVNPEKIRDIIGPAGKTITKIISETGVKIDIEEDGRLYITAPNLEAGERAKQMI. The region spanning 620–688 is the S1 motif domain; that stretch reads GGIYLGKVLR…KLGRIVLSRK (69 aa). The disordered stretch occupies residues 688-707; the sequence is KDAMPDEEESDNRKSDNRKK. The segment covering 698–707 has biased composition (basic and acidic residues); it reads DNRKSDNRKK.

Belongs to the polyribonucleotide nucleotidyltransferase family. It depends on Mg(2+) as a cofactor.

It is found in the cytoplasm. It catalyses the reaction RNA(n+1) + phosphate = RNA(n) + a ribonucleoside 5'-diphosphate. Its function is as follows. Involved in mRNA degradation. Catalyzes the phosphorolysis of single-stranded polyribonucleotides processively in the 3'- to 5'-direction. In Caldanaerobacter subterraneus subsp. tengcongensis (strain DSM 15242 / JCM 11007 / NBRC 100824 / MB4) (Thermoanaerobacter tengcongensis), this protein is Polyribonucleotide nucleotidyltransferase.